A 357-amino-acid chain; its full sequence is Deoxyuridylate hydroxymethyltransferase (357 aa).

This sequence belongs to the thymidylate synthase family.

The enzyme catalyses dUMP + (6R)-5,10-methylene-5,6,7,8-tetrahydrofolate + H2O = 5-hydroxymethyl-dUMP + (6S)-5,6,7,8-tetrahydrofolate. Catalyzes formation of 5-hydroxymethyldeoxyuridylate (5HMdUMP) as a step in the pathway that replaces dTMP by thymidine hypermodifications in the viral genome. As a final result of the pathway of hypermodification, 5-Nalpha-putrescinylthymidine (Nalpha-PutT) substitutes for about 50% of thymidines in the viral DNA. These modifications probably prevent degradation of viral genome by the host restriction-modification antiviral defense system. This Delftia acidovorans (Pseudomonas acidovorans) protein is Deoxyuridylate hydroxymethyltransferase.